The sequence spans 463 residues: L-seryl-tRNA(Sec) selenium transferase (463 aa).

An N6-(pyridoxal phosphate)lysine modification is found at lysine 295.

It belongs to the SelA family. Homodecamer; pentamer of dimers. Binds only one seryl-tRNA(Sec) per dimer. It depends on pyridoxal 5'-phosphate as a cofactor.

The protein localises to the cytoplasm. The enzyme catalyses L-seryl-tRNA(Sec) + selenophosphate + H(+) = L-selenocysteinyl-tRNA(Sec) + phosphate. Its pathway is aminoacyl-tRNA biosynthesis; selenocysteinyl-tRNA(Sec) biosynthesis; selenocysteinyl-tRNA(Sec) from L-seryl-tRNA(Sec) (bacterial route): step 1/1. Converts seryl-tRNA(Sec) to selenocysteinyl-tRNA(Sec) required for selenoprotein biosynthesis. The protein is L-seryl-tRNA(Sec) selenium transferase of Salmonella paratyphi B (strain ATCC BAA-1250 / SPB7).